The following is a 399-amino-acid chain: MFKKFEYKILYKRIFFTCLILVIYIIGSNISIVSNENLRTHKDSFFKLAITNVGGDLHTLNIFSLGLGPWLSSMIILTLINHKSNDKVKTQTRRERHFKERALTLIISAAQGFYIIHSYINKHAIKDSNMLILLLVLITGTLLMVWLADQNTTYGISGPMPIVLMSLVKSIFNTHFPKLNSSASLITMIIVLLVLALFILFFIELTEYRIEYNDIMNISAKDIPSYLSWKLNPAGSISIMVSLSLFMLTNNIVNFIGRFIVNHNFETHVFNFTNPVGITIYLLLQMILGYFLSRLLINTKRKSKEFLKNGNYFEGIQPGQQTEKFLGSKARRICWFGSIVVAIVLAIPMYSALLVPHLLKEVYFTTQMIVFVYIGINIAETIRAYLYFDSYKQILNKYW.

Transmembrane regions (helical) follow at residues 14–34 (IFFT…SIVS), 60–80 (LNIF…LTLI), 102–122 (ALTL…YINK), 128–148 (SNML…VWLA), 152–172 (TTYG…KSIF), 183–203 (ASLI…LFFI), 237–257 (ISIM…NFIG), 272–292 (FTNP…GYFL), 335–355 (WFGS…ALLV), and 362–382 (VYFT…AETI).

Belongs to the SecY/SEC61-alpha family. SecY2 subfamily. Component of the accessory SecA2/SecY2 protein translocase complex required to export cell wall proteins. May form heterotrimers with SecE and SecG subunits.

The protein localises to the cell membrane. Functionally, part of the accessory SecA2/SecY2 system specifically required for export of possible cell wall proteins. The central subunit of a protein translocation channel. This is Accessory Sec system protein translocase subunit SecY2 from Staphylococcus epidermidis (strain ATCC 12228 / FDA PCI 1200).